The primary structure comprises 186 residues: uncharacterized protein (186 aa).

The Cupin type-2 domain maps to 89 to 164; the sequence is LMSLGIGEDI…NTPLKLYSIY (76 aa). An ATP-binding site is contributed by 117–124; it reads GIVKMGKS.

This is an uncharacterized protein from Bacillus subtilis (strain 168).